The sequence spans 143 residues: D-aminoacyl-tRNA deacylase (143 aa).

Positions 135–136 (GP) match the Gly-cisPro motif, important for rejection of L-amino acids motif.

The protein belongs to the DTD family. In terms of assembly, homodimer.

Its subcellular location is the cytoplasm. The enzyme catalyses glycyl-tRNA(Ala) + H2O = tRNA(Ala) + glycine + H(+). It catalyses the reaction a D-aminoacyl-tRNA + H2O = a tRNA + a D-alpha-amino acid + H(+). In terms of biological role, an aminoacyl-tRNA editing enzyme that deacylates mischarged D-aminoacyl-tRNAs. Also deacylates mischarged glycyl-tRNA(Ala), protecting cells against glycine mischarging by AlaRS. Acts via tRNA-based rather than protein-based catalysis; rejects L-amino acids rather than detecting D-amino acids in the active site. By recycling D-aminoacyl-tRNA to D-amino acids and free tRNA molecules, this enzyme counteracts the toxicity associated with the formation of D-aminoacyl-tRNA entities in vivo and helps enforce protein L-homochirality. This is D-aminoacyl-tRNA deacylase from Mycobacterium avium (strain 104).